A 466-amino-acid chain; its full sequence is Cysteine--tRNA ligase (466 aa).

Residue Cys29 participates in Zn(2+) binding. The short motif at 31 to 41 (PTVYDFAHIGN) is the 'HIGH' region element. Zn(2+) is bound by residues Cys210, His235, and Glu239. A 'KMSKS' region motif is present at residues 267 to 271 (KMSKS). Lys270 is an ATP binding site.

The protein belongs to the class-I aminoacyl-tRNA synthetase family. In terms of assembly, monomer. The cofactor is Zn(2+).

It localises to the cytoplasm. The catalysed reaction is tRNA(Cys) + L-cysteine + ATP = L-cysteinyl-tRNA(Cys) + AMP + diphosphate. The polypeptide is Cysteine--tRNA ligase (Solibacter usitatus (strain Ellin6076)).